The sequence spans 393 residues: NAD(P)H-quinone oxidoreductase subunit H, chloroplastic (393 aa).

Belongs to the complex I 49 kDa subunit family. As to quaternary structure, NDH is composed of at least 16 different subunits, 5 of which are encoded in the nucleus.

Its subcellular location is the plastid. The protein resides in the chloroplast thylakoid membrane. It catalyses the reaction a plastoquinone + NADH + (n+1) H(+)(in) = a plastoquinol + NAD(+) + n H(+)(out). The catalysed reaction is a plastoquinone + NADPH + (n+1) H(+)(in) = a plastoquinol + NADP(+) + n H(+)(out). In terms of biological role, NDH shuttles electrons from NAD(P)H:plastoquinone, via FMN and iron-sulfur (Fe-S) centers, to quinones in the photosynthetic chain and possibly in a chloroplast respiratory chain. The immediate electron acceptor for the enzyme in this species is believed to be plastoquinone. Couples the redox reaction to proton translocation, and thus conserves the redox energy in a proton gradient. The polypeptide is NAD(P)H-quinone oxidoreductase subunit H, chloroplastic (Olimarabidopsis pumila (Dwarf rocket)).